The primary structure comprises 83 residues: Cytochrome b559 subunit alpha (83 aa).

The helical transmembrane segment at 21–35 (VIHSITIPSLFIAGW) threads the bilayer. His23 is a binding site for heme.

This sequence belongs to the PsbE/PsbF family. Heterodimer of an alpha subunit and a beta subunit. PSII is composed of 1 copy each of membrane proteins PsbA, PsbB, PsbC, PsbD, PsbE, PsbF, PsbH, PsbI, PsbJ, PsbK, PsbL, PsbM, PsbT, PsbX, PsbY, PsbZ, Psb30/Ycf12, at least 3 peripheral proteins of the oxygen-evolving complex and a large number of cofactors. It forms dimeric complexes. Heme b serves as cofactor.

It localises to the plastid. It is found in the chloroplast thylakoid membrane. This b-type cytochrome is tightly associated with the reaction center of photosystem II (PSII). PSII is a light-driven water:plastoquinone oxidoreductase that uses light energy to abstract electrons from H(2)O, generating O(2) and a proton gradient subsequently used for ATP formation. It consists of a core antenna complex that captures photons, and an electron transfer chain that converts photonic excitation into a charge separation. The chain is Cytochrome b559 subunit alpha from Anthoceros angustus (Hornwort).